The following is an 866-amino-acid chain: MAPTVLMVAEKPSIALSIASALSGGRMSTRKGSTDVHEFDGMFQGSHAFFKVTSVIGHVLSVDFPPAYQNWEGTDPMDLFVAPVLRSECNPKAHIRRHLAQEARGCTYLVLWLDCDREGENICYEVIDCTGIPKSEVGRRIFRAKFSSVTEKDIMDAMNNLVLPSKDEALAVDARQEIDLKVGVAFTRFQTRYFQGKYGNLDSRVISYGPCQTPTLGFCVQRYQQITTFKPEKFWSLKTYVIKDGNEIQLEWDRKKLFDFDVTVMFQKMVASDGILKVTDISVKEECKARPPGLNTVNLLKVASSALGIGPQTAMHLAERLYTQGFISYPRTESTAYPSSFDFRSALAALAHNPLWSNDVRTLLDTGFVKPKQGHDAGDHPPITPMRLATEEALGTDAWRLYQYICQHFIGTVSPDCRYTRTSIEFTSGGETFHCVGNRVTSKGFTSIMPWLAVSENNIPAYKKGDAVSIHKVDIYEGSTTPPDYLSESELISLMEKNGIGTDASIPVHVNNICERNYVQVNSGRRLVPTPLGTTLIRGYQCIDADLCLPDIRRFIEQQITLIAKGEADHLQVVQHVLQQFMKKYSYFVKKIENMDALFEAQFSPLADSGRLLSKCGKCARYMKYISTQPMRLYCVTCEEVYYLPQNGSIKLYKEIICPLDGFELLLFSMVGPDAKSFPLCPFCYNSPPFEGIDKLFGALKLDDTGKVGKGAGMPCFLCLHPTCKQSMITQGVCACPECTGTLILDPVSAPKWRLYCNRCNCIVLLPHAAHKISTTDKKCPTCESTIIEVDFNKKTTPLKDGATLHEGCILCDELLHSLIEMKHGKSFFMRRGRGRGRGRGRGRGSSRGRRGSSRHDDPKMSFRDF.

In terms of domain architecture, Toprim spans threonine 4 to valine 149. Mg(2+) is bound by residues glutamate 10, aspartate 114, and aspartate 116. Positions serine 165–tyrosine 585 constitute a Topo IA-type catalytic domain. An interaction with DNA region spans residues serine 207 to glutamine 212. Tyrosine 329 serves as the catalytic O-(5'-phospho-DNA)-tyrosine intermediate. Residues methionine 830 to serine 853 are compositionally biased toward basic residues. Residues methionine 830–phenylalanine 866 form a disordered region. A compositionally biased stretch (basic and acidic residues) spans serine 854–phenylalanine 866.

The protein belongs to the type IA topoisomerase family. Mg(2+) serves as cofactor.

It catalyses the reaction ATP-independent breakage of single-stranded DNA, followed by passage and rejoining.. In terms of biological role, releases the supercoiling and torsional tension of DNA introduced during the DNA replication and transcription by transiently cleaving and rejoining one strand of the DNA duplex. Introduces a single-strand break via transesterification at a target site in duplex DNA. The scissile phosphodiester is attacked by the catalytic tyrosine of the enzyme, resulting in the formation of a DNA-(5'-phosphotyrosyl)-enzyme intermediate and the expulsion of a 3'-OH DNA strand. The free DNA strand than undergoes passage around the unbroken strand thus removing DNA supercoils. Finally, in the religation step, the DNA 3'-OH attacks the covalent intermediate to expel the active-site tyrosine and restore the DNA phosphodiester backbone. The protein is DNA topoisomerase 3-beta (TOP3B) of Oryza sativa subsp. japonica (Rice).